The primary structure comprises 149 residues: 3-dehydroquinate dehydratase (149 aa).

The active-site Proton acceptor is the tyrosine 22. The substrate site is built by asparagine 74, histidine 80, and aspartate 87. The Proton donor role is filled by histidine 100. Residues methionine 101–serine 102 and arginine 111 contribute to the substrate site.

Belongs to the type-II 3-dehydroquinase family. In terms of assembly, homododecamer.

It catalyses the reaction 3-dehydroquinate = 3-dehydroshikimate + H2O. Its pathway is metabolic intermediate biosynthesis; chorismate biosynthesis; chorismate from D-erythrose 4-phosphate and phosphoenolpyruvate: step 3/7. Catalyzes a trans-dehydration via an enolate intermediate. This is 3-dehydroquinate dehydratase from Leptothrix cholodnii (strain ATCC 51168 / LMG 8142 / SP-6) (Leptothrix discophora (strain SP-6)).